The chain runs to 220 residues: Cytidylate kinase (220 aa).

9-17 (GPAASGKST) lines the ATP pocket.

Belongs to the cytidylate kinase family. Type 1 subfamily.

It localises to the cytoplasm. The catalysed reaction is CMP + ATP = CDP + ADP. It catalyses the reaction dCMP + ATP = dCDP + ADP. This Thermotoga sp. (strain RQ2) protein is Cytidylate kinase.